Here is a 532-residue protein sequence, read N- to C-terminus: Phosphoenolpyruvate carboxylase (532 aa).

It belongs to the PEPCase type 2 family. Homotetramer. It depends on Mg(2+) as a cofactor.

The catalysed reaction is oxaloacetate + phosphate = phosphoenolpyruvate + hydrogencarbonate. Catalyzes the irreversible beta-carboxylation of phosphoenolpyruvate (PEP) to form oxaloacetate (OAA), a four-carbon dicarboxylic acid source for the tricarboxylic acid cycle. The polypeptide is Phosphoenolpyruvate carboxylase (Methanopyrus kandleri (strain AV19 / DSM 6324 / JCM 9639 / NBRC 100938)).